The chain runs to 311 residues: Putative dihydroorotate dehydrogenase A (fumarate) (311 aa).

Substrate contacts are provided by residues Lys45, 69–73 (NSMGL), and Asn128. 45–46 (KT) contacts FMN. Asn128 contributes to the FMN binding site. Cys131 serves as the catalytic Nucleophile. The FMN site is built by Lys165 and Val193. 194–195 (NS) is a binding site for substrate. Residues Gly220, 248–249 (GG), and 270–271 (GT) each bind FMN.

It belongs to the dihydroorotate dehydrogenase family. Type 1 subfamily. As to quaternary structure, homodimer. FMN is required as a cofactor.

The protein localises to the cytoplasm. The enzyme catalyses (S)-dihydroorotate + fumarate = orotate + succinate. Its pathway is pyrimidine metabolism; UMP biosynthesis via de novo pathway. In terms of biological role, catalyzes the conversion of dihydroorotate to orotate with fumarate as the electron acceptor. The polypeptide is Putative dihydroorotate dehydrogenase A (fumarate) (pyrD) (Streptococcus uberis (strain ATCC BAA-854 / 0140J)).